The sequence spans 124 residues: Small ribosomal subunit protein uS12 (124 aa).

The residue at position 89 (Asp-89) is a 3-methylthioaspartic acid. The tract at residues 105-124 (SGVSDRRQGRSKYGAKRPKS) is disordered. Residues 113 to 124 (GRSKYGAKRPKS) show a composition bias toward basic residues.

Belongs to the universal ribosomal protein uS12 family. As to quaternary structure, part of the 30S ribosomal subunit. Contacts proteins S8 and S17. May interact with IF1 in the 30S initiation complex.

In terms of biological role, with S4 and S5 plays an important role in translational accuracy. Interacts with and stabilizes bases of the 16S rRNA that are involved in tRNA selection in the A site and with the mRNA backbone. Located at the interface of the 30S and 50S subunits, it traverses the body of the 30S subunit contacting proteins on the other side and probably holding the rRNA structure together. The combined cluster of proteins S8, S12 and S17 appears to hold together the shoulder and platform of the 30S subunit. The polypeptide is Small ribosomal subunit protein uS12 (Colwellia psychrerythraea (strain 34H / ATCC BAA-681) (Vibrio psychroerythus)).